Reading from the N-terminus, the 1711-residue chain is Reverse gyrase (1711 aa).

The RG N-terminal-type zinc-finger motif lies at methionine 1 to serine 39. Zn(2+) is bound by residues cysteine 9, cysteine 12, cysteine 27, and cysteine 30. Residues glutamine 89 and alanine 106–serine 113 each bind ATP. Positions valine 93–leucine 256 constitute a Helicase ATP-binding domain. Residues aspartate 213–aspartate 216 carry the DEAD box motif. A topoisomerase I region spans residues aspartate 638–glycine 1711. One can recognise a Toprim domain in the interval serine 642–valine 805. Residue glutamate 648 coordinates Mg(2+). The RG C-terminal-type zinc finger occupies leucine 722 to aspartate 751. Zn(2+) contacts are provided by cysteine 725, cysteine 728, cysteine 741, and cysteine 744. Residue aspartate 774 participates in Mg(2+) binding. A Topo IA-type catalytic domain is found at asparagine 821–valine 1709. A DOD-type homing endonuclease domain is found at valine 1160–isoleucine 1287. The active-site O-(5'-phospho-DNA)-tyrosine intermediate is tyrosine 1452.

This sequence in the N-terminal section; belongs to the DEAD box helicase family. DDVD subfamily. It in the C-terminal section; belongs to the type IA topoisomerase family. In terms of assembly, monomer. Zn(2+) is required as a cofactor. Mg(2+) serves as cofactor. This protein undergoes a protein self splicing that involves a post-translational excision of the intervening region (intein) followed by peptide ligation.

It is found in the cytoplasm. It carries out the reaction ATP + H2O = ADP + phosphate + H(+). In terms of biological role, modifies the topological state of DNA by introducing positive supercoils in an ATP-dependent process, increasing the linking number in steps of +1. Binds to single-stranded DNA, transiently cleaves and then rejoins the ends, introducing a positive supercoil in the process. The scissile phosphodiester is attacked by the catalytic tyrosine of the enzyme, resulting in the formation of a DNA-(5'-phosphotyrosyl)-enzyme intermediate. Probably involved in rewinding DNA strands in regions of the chromosome that have opened up to allow replication, transcription, DNA repair and/or for DNA protection. This chain is Reverse gyrase, found in Thermococcus kodakarensis (strain ATCC BAA-918 / JCM 12380 / KOD1) (Pyrococcus kodakaraensis (strain KOD1)).